Here is a 316-residue protein sequence, read N- to C-terminus: Olfactory receptor 2AG2 (316 aa).

Over Met1–Thr30 the chain is Extracellular. 2 N-linked (GlcNAc...) asparagine glycosylation sites follow: Asn5 and Asn19. The helical transmembrane segment at Phe31–Ile51 threads the bilayer. Residues Glu52 to His56 lie on the Cytoplasmic side of the membrane. A helical membrane pass occupies residues Met57–Val77. Over Thr78–Cys97 the chain is Extracellular. Cys97 and Cys179 are oxidised to a cystine. A helical membrane pass occupies residues Ala98 to Met118. The Cytoplasmic portion of the chain corresponds to Ala119–Arg139. The chain crosses the membrane as a helical span at residues Val140–Thr160. The Extracellular segment spans residues Met161–Thr205. The helical transmembrane segment at Phe206–Leu226 threads the bilayer. Over Arg227–His244 the chain is Cytoplasmic. The chain crosses the membrane as a helical span at residues Leu245 to Phe265. Topologically, residues His266–Asp271 are extracellular. Residues Asn272–Leu292 traverse the membrane as a helical segment. Residues Arg293 to Leu316 are Cytoplasmic-facing.

Belongs to the G-protein coupled receptor 1 family.

The protein resides in the cell membrane. Functionally, odorant receptor. In Homo sapiens (Human), this protein is Olfactory receptor 2AG2 (OR2AG2).